We begin with the raw amino-acid sequence, 424 residues long: Serine--tRNA ligase (424 aa).

A compositionally biased stretch (basic and acidic residues) spans 1 to 15 (MIDPKLLRTDPDAVR). Residues 1–27 (MIDPKLLRTDPDAVRRSQAARGEDSSV) form a disordered region. Position 230-232 (230-232 (TSE)) interacts with L-serine. ATP contacts are provided by residues 261–263 (RRE) and Val-277. Residue Glu-284 participates in L-serine binding. An ATP-binding site is contributed by 348-351 (EITS). L-serine is bound at residue Thr-382.

This sequence belongs to the class-II aminoacyl-tRNA synthetase family. Type-1 seryl-tRNA synthetase subfamily. In terms of assembly, homodimer. The tRNA molecule binds across the dimer.

It is found in the cytoplasm. It carries out the reaction tRNA(Ser) + L-serine + ATP = L-seryl-tRNA(Ser) + AMP + diphosphate + H(+). It catalyses the reaction tRNA(Sec) + L-serine + ATP = L-seryl-tRNA(Sec) + AMP + diphosphate + H(+). It participates in aminoacyl-tRNA biosynthesis; selenocysteinyl-tRNA(Sec) biosynthesis; L-seryl-tRNA(Sec) from L-serine and tRNA(Sec): step 1/1. In terms of biological role, catalyzes the attachment of serine to tRNA(Ser). Is also able to aminoacylate tRNA(Sec) with serine, to form the misacylated tRNA L-seryl-tRNA(Sec), which will be further converted into selenocysteinyl-tRNA(Sec). The protein is Serine--tRNA ligase of Cutibacterium acnes (strain DSM 16379 / KPA171202) (Propionibacterium acnes).